The chain runs to 208 residues: Calaxin (208 aa).

3 EF-hand domains span residues 64–99 (TDDMIMDRVFRGFDKDNDSFISVTEWVEGLSVFLHG), 100–135 (TLEEKIKYCFGVYDLNGDGYISREEMFHMLKNSLLK), and 145–180 (GVKDLVEIALKKMDYDHDSKLSYTDFEKAVQEENLL). Ca(2+) is bound by residues aspartate 77, aspartate 79, aspartate 81, aspartate 113, asparagine 115, aspartate 117, tyrosine 119, glutamate 124, aspartate 158, aspartate 160, aspartate 162, lysine 164, and aspartate 169.

In terms of assembly, component of the outer dynein arm-docking complex along with ODAD1, ODAD2, ODAD3 and ODAD4.

It is found in the cytoplasm. The protein localises to the cytoskeleton. It localises to the cilium axoneme. The protein resides in the cell projection. Its subcellular location is the cilium. It is found in the flagellum. In terms of biological role, component of the outer dynein arm-docking complex (ODA-DC) that mediates outer dynein arms (ODA) binding onto the doublet microtubule. Seems to regulate the assembly of both ODAs and their axonemal docking complex onto ciliary microtubules. Regulates ciliary and flagellar motility and is required for cilia-driven determination of body laterality. The polypeptide is Calaxin (clxn) (Xenopus laevis (African clawed frog)).